We begin with the raw amino-acid sequence, 594 residues long: DNA mismatch repair protein MutL (594 aa).

Belongs to the DNA mismatch repair MutL/HexB family.

In terms of biological role, this protein is involved in the repair of mismatches in DNA. It is required for dam-dependent methyl-directed DNA mismatch repair. May act as a 'molecular matchmaker', a protein that promotes the formation of a stable complex between two or more DNA-binding proteins in an ATP-dependent manner without itself being part of a final effector complex. This Tolumonas auensis (strain DSM 9187 / NBRC 110442 / TA 4) protein is DNA mismatch repair protein MutL.